We begin with the raw amino-acid sequence, 318 residues long: Thymidylate synthase (318 aa).

Residues arginine 25 and arginine 180 to arginine 181 each bind dUMP. Cysteine 200 (nucleophile) is an active-site residue. DUMP is bound by residues arginine 220–aspartate 223, asparagine 231, and histidine 261–tyrosine 263. A (6R)-5,10-methylene-5,6,7,8-tetrahydrofolate-binding site is contributed by aspartate 223. Alanine 317 contributes to the (6R)-5,10-methylene-5,6,7,8-tetrahydrofolate binding site.

The protein belongs to the thymidylate synthase family. Bacterial-type ThyA subfamily. As to quaternary structure, homodimer.

Its subcellular location is the cytoplasm. The enzyme catalyses dUMP + (6R)-5,10-methylene-5,6,7,8-tetrahydrofolate = 7,8-dihydrofolate + dTMP. Its pathway is pyrimidine metabolism; dTTP biosynthesis. Functionally, catalyzes the reductive methylation of 2'-deoxyuridine-5'-monophosphate (dUMP) to 2'-deoxythymidine-5'-monophosphate (dTMP) while utilizing 5,10-methylenetetrahydrofolate (mTHF) as the methyl donor and reductant in the reaction, yielding dihydrofolate (DHF) as a by-product. This enzymatic reaction provides an intracellular de novo source of dTMP, an essential precursor for DNA biosynthesis. The sequence is that of Thymidylate synthase from Lactobacillus helveticus (strain DPC 4571).